We begin with the raw amino-acid sequence, 642 residues long: Extracellular metalloproteinase 4 (642 aa).

A signal peptide spans 1 to 18; that stretch reads MHGLLLAGLLALPLNVLA. Positions 19–253 are excised as a propeptide; the sequence is HPTESHSSGI…VHSVVDYVSA (235 aa). A compositionally biased stretch (polar residues) spans 49–60; the sequence is SDSLTGQDGQSF. The interval 49 to 72 is disordered; sequence SDSLTGQDGQSFTASSADADTSSG. Over residues 61–71 the composition is skewed to low complexity; that stretch reads TASSADADTSS. Asn419 carries N-linked (GlcNAc...) asparagine glycosylation. His436 contributes to the Zn(2+) binding site. Residue Glu437 is part of the active site. A Zn(2+)-binding site is contributed by His440. Residues Asn509 and Asn602 are each glycosylated (N-linked (GlcNAc...) asparagine).

The protein belongs to the peptidase M36 family. The cofactor is Zn(2+).

The protein resides in the secreted. Its function is as follows. Secreted metalloproteinase that allows assimilation of proteinaceous substrates and probably acts as a virulence factor. This chain is Extracellular metalloproteinase 4 (MEP4), found in Arthroderma gypseum (strain ATCC MYA-4604 / CBS 118893) (Microsporum gypseum).